The primary structure comprises 276 residues: Nuclear egress protein 2 (276 aa).

Residues 1–253 (MAGMGKPYGG…LFRAPRPGPP (253 aa)) lie on the Perinuclear space side of the membrane. Residues 212 to 225 (HSSGAPGPGVAASG) show a composition bias toward low complexity. The segment at 212 to 237 (HSSGAPGPGVAASGPPAPPGRGPARP) is disordered. The chain crosses the membrane as a helical span at residues 254–274 (ALLLLAAGLFLGAAIWWAVGA). At 275-276 (RL) the chain is on the nuclear side.

Belongs to the herpesviridae NEC2 protein family. Forms a heterohexameric complex with NEC1. In terms of processing, phosphorylated.

The protein resides in the host nucleus inner membrane. In terms of biological role, plays an essential role in virion nuclear egress, the first step of virion release from infected cell. Within the host nucleus, NEC1 interacts with the newly formed capsid through the vertexes and directs it to the inner nuclear membrane by associating with NEC2. Induces the budding of the capsid at the inner nuclear membrane as well as its envelopment into the perinuclear space. There, the NEC1/NEC2 complex promotes the fusion of the enveloped capsid with the outer nuclear membrane and the subsequent release of the viral capsid into the cytoplasm where it will reach the secondary budding sites in the host Golgi or trans-Golgi network. In Homo sapiens (Human), this protein is Nuclear egress protein 2.